Here is a 191-residue protein sequence, read N- to C-terminus: Small ribosomal subunit protein uS10c (191 aa).

A chloroplast-targeting transit peptide spans Met1–Phe56.

This sequence belongs to the universal ribosomal protein uS10 family. In terms of assembly, part of the 30S ribosomal subunit.

The protein resides in the plastid. It is found in the chloroplast. The chain is Small ribosomal subunit protein uS10c (RPS10) from Arabidopsis thaliana (Mouse-ear cress).